The sequence spans 235 residues: Probable transcriptional regulatory protein MPN_478 (235 aa).

Belongs to the TACO1 family.

It is found in the cytoplasm. In Mycoplasma pneumoniae (strain ATCC 29342 / M129 / Subtype 1) (Mycoplasmoides pneumoniae), this protein is Probable transcriptional regulatory protein MPN_478.